Consider the following 78-residue polypeptide: Short neurotoxin SNTX14 (78 aa).

The first 21 residues, 1 to 21 (MKTLLLTFLVVTIVCLDLGYT), serve as a signal peptide directing secretion. 4 disulfides stabilise this stretch: Cys24–Cys40, Cys33–Cys58, Cys62–Cys70, and Cys71–Cys76.

The protein belongs to the three-finger toxin family. Short-chain subfamily. As to expression, expressed by the venom gland.

The protein resides in the secreted. Functionally, this three-finger toxin binds and inhibits the nicotinic acetylcholine receptor (nAChR). The chain is Short neurotoxin SNTX14 from Ophiophagus hannah (King cobra).